The following is a 132-amino-acid chain: Small ribosomal subunit protein uS8 (132 aa).

Belongs to the universal ribosomal protein uS8 family. Part of the 30S ribosomal subunit. Contacts proteins S5 and S12.

One of the primary rRNA binding proteins, it binds directly to 16S rRNA central domain where it helps coordinate assembly of the platform of the 30S subunit. The chain is Small ribosomal subunit protein uS8 from Desulforamulus reducens (strain ATCC BAA-1160 / DSM 100696 / MI-1) (Desulfotomaculum reducens).